Reading from the N-terminus, the 181-residue chain is 6,7-dimethyl-8-ribityllumazine synthase (181 aa).

5-amino-6-(D-ribitylamino)uracil is bound by residues tyrosine 27, 58–60, and 87–89; these read ALE and CVI. 92 to 93 contributes to the (2S)-2-hydroxy-3-oxobutyl phosphate binding site; sequence ET. Residue histidine 95 is the Proton donor of the active site. A 5-amino-6-(D-ribitylamino)uracil-binding site is contributed by asparagine 120. Residue arginine 134 coordinates (2S)-2-hydroxy-3-oxobutyl phosphate.

It belongs to the DMRL synthase family.

It carries out the reaction (2S)-2-hydroxy-3-oxobutyl phosphate + 5-amino-6-(D-ribitylamino)uracil = 6,7-dimethyl-8-(1-D-ribityl)lumazine + phosphate + 2 H2O + H(+). The protein operates within cofactor biosynthesis; riboflavin biosynthesis; riboflavin from 2-hydroxy-3-oxobutyl phosphate and 5-amino-6-(D-ribitylamino)uracil: step 1/2. Catalyzes the formation of 6,7-dimethyl-8-ribityllumazine by condensation of 5-amino-6-(D-ribitylamino)uracil with 3,4-dihydroxy-2-butanone 4-phosphate. This is the penultimate step in the biosynthesis of riboflavin. This is 6,7-dimethyl-8-ribityllumazine synthase from Methylobacterium nodulans (strain LMG 21967 / CNCM I-2342 / ORS 2060).